We begin with the raw amino-acid sequence, 194 residues long: Peptidyl-tRNA hydrolase (194 aa).

A tRNA-binding site is contributed by tyrosine 17. Histidine 22 functions as the Proton acceptor in the catalytic mechanism. Positions 68, 70, and 116 each coordinate tRNA.

It belongs to the PTH family. In terms of assembly, monomer.

Its subcellular location is the cytoplasm. It carries out the reaction an N-acyl-L-alpha-aminoacyl-tRNA + H2O = an N-acyl-L-amino acid + a tRNA + H(+). Its function is as follows. Hydrolyzes ribosome-free peptidyl-tRNAs (with 1 or more amino acids incorporated), which drop off the ribosome during protein synthesis, or as a result of ribosome stalling. Functionally, catalyzes the release of premature peptidyl moieties from peptidyl-tRNA molecules trapped in stalled 50S ribosomal subunits, and thus maintains levels of free tRNAs and 50S ribosomes. The chain is Peptidyl-tRNA hydrolase from Marinomonas sp. (strain MWYL1).